Reading from the N-terminus, the 496-residue chain is Glycylpeptide N-tetradecanoyltransferase 1 (496 aa).

The interval 1-82 is disordered; it reads MADESETAVK…SAQDQPVKMN (82 aa). 2 positions are modified to phosphoserine: Ser-31 and Ser-47. The span at 55-66 shows a compositional bias: basic residues; it reads KKKKKKQKKKKE. At Ser-83 the chain carries Phosphoserine. Residues Gln-118, Phe-119, Trp-120, Phe-247, Leu-248, Cys-249, Val-250, Ser-256, Arg-258, Val-259, and Ala-260 each contribute to the tetradecanoyl-CoA site.

It belongs to the NMT family.

Its subcellular location is the cytoplasm. The protein localises to the cytosol. The protein resides in the membrane. It carries out the reaction N-terminal glycyl-[protein] + tetradecanoyl-CoA = N-tetradecanoylglycyl-[protein] + CoA + H(+). The enzyme catalyses N-terminal glycyl-L-lysyl-[protein] + tetradecanoyl-CoA = N-terminal glycyl-(N(6)-tetradecanoyl)-L-lysyl-[protein] + CoA + H(+). Its function is as follows. Adds a myristoyl group to the N-terminal glycine residue of certain cellular and viral proteins. Also able to mediate N-terminal lysine myristoylation of proteins: catalyzes myristoylation of ARF6 on both 'Gly-2' and 'Lys-3'. Lysine myristoylation is required to maintain ARF6 on membranes during the GTPase cycle. The sequence is that of Glycylpeptide N-tetradecanoyltransferase 1 (NMT1) from Pongo abelii (Sumatran orangutan).